Here is a 272-residue protein sequence, read N- to C-terminus: Granaticin polyketide synthase putative ketoacyl reductase 1 (272 aa).

An NAD(+)-binding site is contributed by 21 to 45 (LVTGATSGIGLAIARRLAALGARTF). Residue serine 155 coordinates substrate. The active-site Proton acceptor is the tyrosine 168.

Belongs to the short-chain dehydrogenases/reductases (SDR) family.

It participates in antibiotic biosynthesis; granaticin biosynthesis. This Streptomyces violaceoruber protein is Granaticin polyketide synthase putative ketoacyl reductase 1 (gra-orf5).